Here is a 593-residue protein sequence, read N- to C-terminus: Alanine--tRNA ligase (593 aa).

Histidine 456, histidine 460, cysteine 558, and histidine 562 together coordinate Zn(2+).

Belongs to the class-II aminoacyl-tRNA synthetase family. It depends on Zn(2+) as a cofactor.

Its subcellular location is the cytoplasm. It catalyses the reaction tRNA(Ala) + L-alanine + ATP = L-alanyl-tRNA(Ala) + AMP + diphosphate. Its function is as follows. Catalyzes the attachment of alanine to tRNA(Ala) in a two-step reaction: alanine is first activated by ATP to form Ala-AMP and then transferred to the acceptor end of tRNA(Ala). Also edits incorrectly charged Ser-tRNA(Ala) and Gly-tRNA(Ala) via its editing domain. The protein is Alanine--tRNA ligase (alaS) of Borrelia hermsii (strain HS1 / DAH).